Consider the following 74-residue polypeptide: Translation initiation factor IF-1 2 (74 aa).

Positions 1-73 constitute an S1-like domain; it reads MTKNKNVIEV…TRGRIVFRYR (73 aa).

Belongs to the IF-1 family. Component of the 30S ribosomal translation pre-initiation complex which assembles on the 30S ribosome in the order IF-2 and IF-3, IF-1 and N-formylmethionyl-tRNA(fMet); mRNA recruitment can occur at any time during PIC assembly.

The protein localises to the cytoplasm. One of the essential components for the initiation of protein synthesis. Stabilizes the binding of IF-2 and IF-3 on the 30S subunit to which N-formylmethionyl-tRNA(fMet) subsequently binds. Helps modulate mRNA selection, yielding the 30S pre-initiation complex (PIC). Upon addition of the 50S ribosomal subunit IF-1, IF-2 and IF-3 are released leaving the mature 70S translation initiation complex. This chain is Translation initiation factor IF-1 2, found in Streptomyces avermitilis (strain ATCC 31267 / DSM 46492 / JCM 5070 / NBRC 14893 / NCIMB 12804 / NRRL 8165 / MA-4680).